Here is a 129-residue protein sequence, read N- to C-terminus: Large ribosomal subunit protein bL19 (129 aa).

This sequence belongs to the bacterial ribosomal protein bL19 family.

This protein is located at the 30S-50S ribosomal subunit interface and may play a role in the structure and function of the aminoacyl-tRNA binding site. The chain is Large ribosomal subunit protein bL19 from Granulibacter bethesdensis (strain ATCC BAA-1260 / CGDNIH1).